The sequence spans 307 residues: Cysteine synthase (307 aa).

At lysine 42 the chain carries N6-(pyridoxal phosphate)lysine. Residues asparagine 72, 176–180 (GTGGH), and serine 263 contribute to the pyridoxal 5'-phosphate site.

Belongs to the cysteine synthase/cystathionine beta-synthase family. Requires pyridoxal 5'-phosphate as cofactor.

The enzyme catalyses O-acetyl-L-serine + hydrogen sulfide = L-cysteine + acetate. The protein operates within amino-acid biosynthesis; L-cysteine biosynthesis; L-cysteine from L-serine: step 2/2. This Flavobacterium sp. (strain K3-15 / DSM ID92-509) protein is Cysteine synthase (cysK).